Here is a 579-residue protein sequence, read N- to C-terminus: Transcription factor MTB2 (579 aa).

The interval Gly-373–Gln-439 is disordered. Residues Ser-382–Val-392 show a composition bias toward low complexity. 2 stretches are compositionally biased toward basic and acidic residues: residues Glu-393–Arg-415 and Asn-425–Gln-439. Residues Glu-428–Arg-441 form a basic motif; degenerate region. The bHLH domain maps to Glu-428 to Met-477. A helix-loop-helix motif region spans residues Glu-442–Met-477.

The protein resides in the nucleus. Functionally, transcription factor that negatively regulates jasmonate (JA) signaling. Negatively regulates JA-dependent response to wounding, JA-induced expression of defense genes, JA-dependent responses against herbivorous insects, and JA-dependent resistance against Botrytis cinerea infection. Plays a positive role in resistance against the bacterial pathogen Pseudomonas syringae pv tomato DC3000. The polypeptide is Transcription factor MTB2 (Solanum lycopersicum (Tomato)).